Reading from the N-terminus, the 1472-residue chain is Adhesion G protein-coupled receptor L1 (1472 aa).

Positions 1–24 are cleaved as a signal peptide; sequence MARLAAVLWSLCVTAILVTSATQG. The Extracellular portion of the chain corresponds to 25–857; the sequence is LSRAGLPFGL…EIYQGRINEL (833 aa). In terms of domain architecture, SUEL-type lectin spans 40–129; that stretch reads ACEGYPIELR…KYLEVQYDCV (90 aa). Disulfide bonds link Cys41–Cys71, Cys50–Cys128, Cys83–Cys115, Cys96–Cys102, and Cys140–Cys322. Alpha-L-rhamnose is bound at residue Glu42. N-linked (GlcNAc...) asparagine glycosylation occurs at Asn98. Residue 117–120 coordinates alpha-L-rhamnose; sequence GTYK. The 260-residue stretch at 139 to 398 folds into the Olfactomedin-like domain; sequence VCPGTLQKVL…VVRYSLEFGP (260 aa). A disordered region spans residues 400 to 468; it reads DPSAGPATSP…APAPSTRRPP (69 aa). Positions 405–441 are enriched in low complexity; the sequence is PATSPPLSTTTTARPTPLTSTASPAATTPLRRAPLTT. A compositionally biased stretch (pro residues) spans 453–468; that stretch reads DLPPATAPAPSTRRPP. 2 disulfide bridges follow: Cys480–Cys515 and Cys503–Cys532. N-linked (GlcNAc...) asparagine glycosylation is found at Asn531, Asn640, Asn741, Asn800, Asn805, and Asn826. A GAIN-B domain is found at 669-850; it reads PARFLAAKQN…AVLMAHREIY (182 aa). 2 cysteine pairs are disulfide-bonded: Cys801/Cys832 and Cys820/Cys834. The interval 801–850 is GPS; the sequence is CSFWNYSERSMLGYWSTQGCRLVESNKTHTTCACSHLTNFAVLMAHREIY. A helical transmembrane segment spans residues 858–878; it reads LLSVITWVGIVISLVCLAICI. At 879 to 892 the chain is on the cytoplasmic side; that stretch reads STFCFLRGLQTDRN. The helical transmembrane segment at 893–913 threads the bilayer; it reads TIHKNLCINLFLAELLFLVGI. Residues 914-919 are Extracellular-facing; sequence DKTQYE. The chain crosses the membrane as a helical span at residues 920–940; sequence IACPIFAGLLHYFFLAAFSWL. The Cytoplasmic segment spans residues 941–963; that stretch reads CLEGVHLYLLLVEVFESEYSRTK. A helical transmembrane segment spans residues 964-984; sequence YYYLGGYCFPALVVGIAAAID. Residues 985–1001 are Extracellular-facing; sequence YRSYGTEKACWLRVDNY. A helical transmembrane segment spans residues 1002–1022; sequence FIWSFIGPVSFVIVVNLVFLM. Residues 1023 to 1049 are Cytoplasmic-facing; sequence VTLHKMVRSSSVLKPDSSRLDNIKSWA. The helical transmembrane segment at 1050–1070 threads the bilayer; sequence LGAIALLFLLGLTWAFGLLFI. At 1071–1074 the chain is on the extracellular side; the sequence is NKES. Residues 1075-1095 form a helical membrane-spanning segment; the sequence is VVMAYLFTTFNAFQGVFIFVF. At 1096-1472 the chain is on the cytoplasmic side; the sequence is HCALQKKVHK…DGQMQLVTSL (377 aa). Position 1193 is an omega-N-methylarginine (Arg1193). Ser1219 is subject to Phosphoserine. Disordered regions lie at residues 1247 to 1271, 1291 to 1325, 1358 to 1427, and 1449 to 1472; these read FNNS…PRGR, NLRG…GGPG, ESES…SRPP, and YLAA…VTSL. Pro residues-rich tracts occupy residues 1301 to 1313 and 1406 to 1418; these read GPPP…PPVP and ALPP…PGPP. Ser1471 carries the phosphoserine modification.

It belongs to the G-protein coupled receptor 2 family. Adhesion G-protein coupled receptor (ADGR) subfamily. Forms a heterodimer, consisting of a large extracellular region (p120) non-covalently linked to a seven-transmembrane moiety (p85). Interacts with syntaxin and with proteins of the SHANK family via the PDZ domain. Interacts (via extracellular domain) with FLRT1, FLRT2 and FLRT3 (via extracellular domain). Autoproteolytically cleaved into 2 subunits, an extracellular subunit and a seven-transmembrane subunit. This proteolytic processing takes place early in the biosynthetic pathway, either in the endoplasmic reticulum or in the early compartment of the Golgi apparatus. In terms of tissue distribution, brain-specific expression but low levels are also detected in kidney, lung and spleen.

The protein localises to the cell membrane. The protein resides in the cell projection. Its subcellular location is the axon. It is found in the growth cone. It localises to the synapse. The protein localises to the presynaptic cell membrane. The protein resides in the synaptosome. Functionally, calcium-independent receptor of high affinity for alpha-latrotoxin, an excitatory neurotoxin present in black widow spider venom which triggers massive exocytosis from neurons and neuroendocrine cells. Receptor for TENM2 that mediates heterophilic synaptic cell-cell contact and postsynaptic specialization. Receptor probably implicated in the regulation of exocytosis. This chain is Adhesion G protein-coupled receptor L1, found in Bos taurus (Bovine).